A 191-amino-acid polypeptide reads, in one-letter code: Acireductone dioxygenase 2 (191 aa).

Positions 102, 104, 108, and 146 each coordinate Fe(2+). The Ni(2+) site is built by histidine 102, histidine 104, glutamate 108, and histidine 146.

It belongs to the acireductone dioxygenase (ARD) family. Monomer. Requires Fe(2+) as cofactor. Ni(2+) serves as cofactor.

It catalyses the reaction 1,2-dihydroxy-5-(methylsulfanyl)pent-1-en-3-one + O2 = 3-(methylsulfanyl)propanoate + CO + formate + 2 H(+). The enzyme catalyses 1,2-dihydroxy-5-(methylsulfanyl)pent-1-en-3-one + O2 = 4-methylsulfanyl-2-oxobutanoate + formate + 2 H(+). It participates in amino-acid biosynthesis; L-methionine biosynthesis via salvage pathway; L-methionine from S-methyl-5-thio-alpha-D-ribose 1-phosphate: step 5/6. Its function is as follows. Catalyzes 2 different reactions between oxygen and the acireductone 1,2-dihydroxy-3-keto-5-methylthiopentene (DHK-MTPene) depending upon the metal bound in the active site. Fe-containing acireductone dioxygenase (Fe-ARD) produces formate and 2-keto-4-methylthiobutyrate (KMTB), the alpha-ketoacid precursor of methionine in the methionine recycle pathway. Ni-containing acireductone dioxygenase (Ni-ARD) produces methylthiopropionate, carbon monoxide and formate, and does not lie on the methionine recycle pathway. This Nocardia farcinica (strain IFM 10152) protein is Acireductone dioxygenase 2.